The primary structure comprises 479 residues: UDP-glycosyltransferase 85A5 (479 aa).

UDP-alpha-D-glucose-binding positions include serine 301, cysteine 358 to glutamine 360, histidine 375 to glutamate 383, and phenylalanine 397 to glutamine 400.

Belongs to the UDP-glycosyltransferase family. In terms of tissue distribution, expressed in roots, shoots and leaves.

The polypeptide is UDP-glycosyltransferase 85A5 (UGT85A5) (Arabidopsis thaliana (Mouse-ear cress)).